A 203-amino-acid chain; its full sequence is Small ribosomal subunit protein uS7B (203 aa).

Belongs to the universal ribosomal protein uS7 family. In terms of assembly, component of the small ribosomal subunit (SSU). Mature yeast ribosomes consist of a small (40S) and a large (60S) subunit. The 40S small subunit contains 1 molecule of ribosomal RNA (18S rRNA) and at least 33 different proteins. The large 60S subunit contains 3 rRNA molecules (25S, 5.8S and 5S rRNA) and at least 46 different proteins.

The protein resides in the cytoplasm. Component of the ribosome, a large ribonucleoprotein complex responsible for the synthesis of proteins in the cell. The small ribosomal subunit (SSU) binds messenger RNAs (mRNAs) and translates the encoded message by selecting cognate aminoacyl-transfer RNA (tRNA) molecules. The large subunit (LSU) contains the ribosomal catalytic site termed the peptidyl transferase center (PTC), which catalyzes the formation of peptide bonds, thereby polymerizing the amino acids delivered by tRNAs into a polypeptide chain. The nascent polypeptides leave the ribosome through a tunnel in the LSU and interact with protein factors that function in enzymatic processing, targeting, and the membrane insertion of nascent chains at the exit of the ribosomal tunnel. This chain is Small ribosomal subunit protein uS7B (rps502), found in Schizosaccharomyces pombe (strain 972 / ATCC 24843) (Fission yeast).